The primary structure comprises 292 residues: Troponin I (292 aa).

Ser1 is subject to N-acetylserine. The segment at 1 to 149 (SSLEERRAAR…GLGGLSPEKK (149 aa)) is disordered. Residues 46-55 (YSAPAEPAYD) show a composition bias toward low complexity. The span at 58–134 (AENRRRQQQE…EARRMAEEQK (77 aa)) shows a compositional bias: basic and acidic residues. An actin-binding region spans residues 237–250 (DTKGKFVKPVLRKV). The interval 255-292 (SKLDKIQRKEAKKSDFRDNLKSSREHEADKEGGEGENE) is disordered.

This sequence belongs to the troponin I family.

In terms of biological role, troponin I is the inhibitory subunit of troponin, the thin filament regulatory complex which confers calcium-sensitivity to striated muscle actomyosin ATPase activity. The polypeptide is Troponin I (Chlamys nipponensis akazara (Akazara scallop)).